The sequence spans 125 residues: Glycine cleavage system H protein 1 (125 aa).

The region spanning 22–103 (KAYIGITDYA…PYGSWLVAVR (82 aa)) is the Lipoyl-binding domain. The residue at position 63 (Lys63) is an N6-lipoyllysine.

The protein belongs to the GcvH family. As to quaternary structure, the glycine cleavage system is composed of four proteins: P, T, L and H. (R)-lipoate serves as cofactor.

Functionally, the glycine cleavage system catalyzes the degradation of glycine. The H protein shuttles the methylamine group of glycine from the P protein to the T protein. The protein is Glycine cleavage system H protein 1 of Caldanaerobacter subterraneus subsp. tengcongensis (strain DSM 15242 / JCM 11007 / NBRC 100824 / MB4) (Thermoanaerobacter tengcongensis).